The sequence spans 37 residues: MKVRASVKPICKDCKIIKRHRILRVICKTKKHKQRQG.

This sequence belongs to the bacterial ribosomal protein bL36 family.

The chain is Large ribosomal subunit protein bL36 from Mycoplasma genitalium (strain ATCC 33530 / DSM 19775 / NCTC 10195 / G37) (Mycoplasmoides genitalium).